A 78-amino-acid polypeptide reads, in one-letter code: Acyl carrier protein (78 aa).

Residues 2 to 77 (SDTADRVKKI…DAIKYIDENK (76 aa)) enclose the Carrier domain. At Ser-37 the chain carries O-(pantetheine 4'-phosphoryl)serine.

This sequence belongs to the acyl carrier protein (ACP) family. Post-translationally, 4'-phosphopantetheine is transferred from CoA to a specific serine of apo-ACP by AcpS. This modification is essential for activity because fatty acids are bound in thioester linkage to the sulfhydryl of the prosthetic group.

The protein resides in the cytoplasm. The protein operates within lipid metabolism; fatty acid biosynthesis. Carrier of the growing fatty acid chain in fatty acid biosynthesis. The sequence is that of Acyl carrier protein from Novosphingobium aromaticivorans (strain ATCC 700278 / DSM 12444 / CCUG 56034 / CIP 105152 / NBRC 16084 / F199).